A 577-amino-acid chain; its full sequence is Aspartate--tRNA ligase (577 aa).

Position 171 (glutamate 171) interacts with L-aspartate. The interval 195 to 198 (QLFK) is aspartate. Arginine 217 is a binding site for L-aspartate. ATP contacts are provided by residues 217–219 (RDE) and glutamine 226. Residue histidine 437 participates in L-aspartate binding. ATP is bound at residue glutamate 472. Arginine 479 contacts L-aspartate. 524–527 (GFDR) provides a ligand contact to ATP.

Belongs to the class-II aminoacyl-tRNA synthetase family. Type 1 subfamily. In terms of assembly, homodimer.

The protein localises to the cytoplasm. The catalysed reaction is tRNA(Asp) + L-aspartate + ATP = L-aspartyl-tRNA(Asp) + AMP + diphosphate. Catalyzes the attachment of L-aspartate to tRNA(Asp) in a two-step reaction: L-aspartate is first activated by ATP to form Asp-AMP and then transferred to the acceptor end of tRNA(Asp). The polypeptide is Aspartate--tRNA ligase (Deinococcus geothermalis (strain DSM 11300 / CIP 105573 / AG-3a)).